The sequence spans 297 residues: Guanylate kinase (297 aa).

Residues 4-183 (GKMIIISGPS…AVAKITDVLH (180 aa)) form the Guanylate kinase-like domain. 11-18 (GPSGVGKG) contacts ATP. Residues 204-297 (EQIVKEKYMY…EQKHYNNDEF (94 aa)) are unknown.

This sequence belongs to the guanylate kinase family.

The protein resides in the cytoplasm. It catalyses the reaction GMP + ATP = GDP + ADP. Its function is as follows. Essential for recycling GMP and indirectly, cGMP. This Mycoplasma capricolum subsp. capricolum (strain California kid / ATCC 27343 / NCTC 10154) protein is Guanylate kinase (gmk).